A 594-amino-acid chain; its full sequence is DNA ligase 2 (594 aa).

E250 contacts ATP. K252 acts as the N6-AMP-lysine intermediate in catalysis. The ATP site is built by R257, R273, E303, F343, R419, and K425.

The protein belongs to the ATP-dependent DNA ligase family. The cofactor is Mg(2+).

It carries out the reaction ATP + (deoxyribonucleotide)n-3'-hydroxyl + 5'-phospho-(deoxyribonucleotide)m = (deoxyribonucleotide)n+m + AMP + diphosphate.. DNA ligase that seals nicks in double-stranded DNA during DNA replication, DNA recombination and DNA repair. The sequence is that of DNA ligase 2 from Korarchaeum cryptofilum (strain OPF8).